The sequence spans 292 residues: MTFQGAFTALVTPFKDGEIDQDAYRELIEWQIEQGIDGLVPCGTTGEAATMTHEEQGEVIRICVEQAKGRVPVIAGAGSNNTKEAVNLTKLAKQAGADATLQITPYYNKPTPAGLLAHFKALSEEASMPFILYNVPGRTGLNALPETIAMIANEVPDVVGVKEATANLGQVSDVIEQCPEGFTVLSGDDFTVLPLLALGGHGVISVVSNIVPDLMSGMCAAYRAGDMKKAQELHFKMQPLNRVMFVETNPIPVKTALGMMGKFETSFRLPLVPLMEASKAKLEAQLKASGLI.

Thr45 is a pyruvate binding site. The active-site Proton donor/acceptor is the Tyr133. Lys162 functions as the Schiff-base intermediate with substrate in the catalytic mechanism. Residue Ile204 participates in pyruvate binding.

The protein belongs to the DapA family. Homotetramer; dimer of dimers.

Its subcellular location is the cytoplasm. The catalysed reaction is L-aspartate 4-semialdehyde + pyruvate = (2S,4S)-4-hydroxy-2,3,4,5-tetrahydrodipicolinate + H2O + H(+). The protein operates within amino-acid biosynthesis; L-lysine biosynthesis via DAP pathway; (S)-tetrahydrodipicolinate from L-aspartate: step 3/4. Functionally, catalyzes the condensation of (S)-aspartate-beta-semialdehyde [(S)-ASA] and pyruvate to 4-hydroxy-tetrahydrodipicolinate (HTPA). This Maridesulfovibrio salexigens (strain ATCC 14822 / DSM 2638 / NCIMB 8403 / VKM B-1763) (Desulfovibrio salexigens) protein is 4-hydroxy-tetrahydrodipicolinate synthase.